We begin with the raw amino-acid sequence, 343 residues long: D-erythrose-4-phosphate dehydrogenase (343 aa).

12-13 (RI) lines the NAD(+) pocket. Substrate contacts are provided by residues 154–156 (SCT), Arg200, 213–214 (TK), and Arg236. The Nucleophile role is filled by Cys155. Asn318 contacts NAD(+).

The protein belongs to the glyceraldehyde-3-phosphate dehydrogenase family. Epd subfamily. In terms of assembly, homotetramer.

The protein localises to the cytoplasm. The catalysed reaction is D-erythrose 4-phosphate + NAD(+) + H2O = 4-phospho-D-erythronate + NADH + 2 H(+). The protein operates within cofactor biosynthesis; pyridoxine 5'-phosphate biosynthesis; pyridoxine 5'-phosphate from D-erythrose 4-phosphate: step 1/5. Its function is as follows. Catalyzes the NAD-dependent conversion of D-erythrose 4-phosphate to 4-phosphoerythronate. The protein is D-erythrose-4-phosphate dehydrogenase of Pseudoalteromonas translucida (strain TAC 125).